We begin with the raw amino-acid sequence, 302 residues long: HTH-type transcriptional regulator AlsR (302 aa).

The 58-residue stretch at 1 to 58 folds into the HTH lysR-type domain; sequence MELRHLQYFIAVAEELHFGKAARRLNMTQPPLSQQIKQLEEEVGVTLLKRTKRFVELT. The H-T-H motif DNA-binding region spans 18 to 37; that stretch reads FGKAARRLNMTQPPLSQQIK.

This sequence belongs to the LysR transcriptional regulatory family.

Functionally, regulates the expression of the alsSD operon for acetoin biosynthesis. The polypeptide is HTH-type transcriptional regulator AlsR (alsR) (Bacillus subtilis (strain 168)).